Here is an 817-residue protein sequence, read N- to C-terminus: B lymphocyte-induced maturation protein 1 homolog (817 aa).

The interval 1-62 (MGQGSGDDGV…PAGVSASGAR (62 aa)) is disordered. Low complexity predominate over residues 15 to 61 (FSSAAAAAHSPPHSPLSVGVSSASSATSSSSTPPSSTSPAGVSASGA). The 139-residue stretch at 103-241 (MNLILKSSSK…ANTELSFWFS (139 aa)) folds into the SET domain. C2H2-type zinc fingers lie at residues 508–530 (YACKDCNKTFGQLSNLKVHVRTH), 536–558 (FKCEICTKEFTQLAHLQKHHLVH), 564–586 (HRCDICDKRFSSTSNLKTHLRLH), and 592–614 (YTCDVCDAKFTQYVHLRLHKRLH). Residues 620 to 642 (YSCGTCGKKYISPSGLRTHWKTT) form a C2H2-type 5; degenerate zinc finger. Residues 709 to 817 (LLGQGPSGMQ…LPSLGLPHYP (109 aa)) are disordered. Residues 779 to 794 (QGGPSSGSGQQQHPQH) are compositionally biased toward low complexity.

Interacts with dre-1; the interaction targets blmp-1 for proteasomal degradation. Interacts with ldb-1 and ham-3. In terms of processing, ubiquitinated by the SCF(dre-1) complex, leading to its degradation by the proteasome. Expressed in hypodermal, vulval, intestinal and distal tip cells.

The protein localises to the nucleus. It is found in the cytoplasm. Its function is as follows. Transcription factor which binds to enhancer elements in the promoter region of genes. Regulates the expression of the transcription factor bed-3 to control vulval development. Promotes terminal differentiation in the hypodermis and is involved in regulation of gonadal outgrowth and entry into the dauer stage. Regulates the timing of dorsalward migration of the distal tip cells of the hermaphrodite gonad by inhibiting precocious unc-5 and lin-29 expression which in turn prevents early dorsalward turning. Plays a role in male tail tip morphogenesis. The sequence is that of B lymphocyte-induced maturation protein 1 homolog from Caenorhabditis elegans.